Consider the following 117-residue polypeptide: Large ribosomal subunit protein bL20 (117 aa).

The protein belongs to the bacterial ribosomal protein bL20 family.

Binds directly to 23S ribosomal RNA and is necessary for the in vitro assembly process of the 50S ribosomal subunit. It is not involved in the protein synthesizing functions of that subunit. In Idiomarina loihiensis (strain ATCC BAA-735 / DSM 15497 / L2-TR), this protein is Large ribosomal subunit protein bL20.